Reading from the N-terminus, the 291-residue chain is MDYLVKALAYDGKVRAYAARTTDMVNEGQRRHGTWPTASAALGRTMTASLMLGAMLKGDDKLTVKIEGGGPIGAIVADANAKGEVRAYVSNPQVHFDLNEQGKLDVRRAVGTNGTLSVVKDLGLREFFTGQVEIVSGELGDDFTYYLVSSEQVPSSVGVGVLVNPDNTILAAGGFIIQLMPGTDDETITKIEQRLSQVEPISKLIQKGLTPEEILEEVLGEKPEILETMPVRFHCPCSKERFETAILGLGKKEIQDMIEEDGQAEAVCHFCNEKYLFTKEELEGLRDQTTR.

Disulfide bonds link C235–C237 and C268–C271.

This sequence belongs to the HSP33 family. Post-translationally, under oxidizing conditions two disulfide bonds are formed involving the reactive cysteines. Under reducing conditions zinc is bound to the reactive cysteines and the protein is inactive.

The protein localises to the cytoplasm. Functionally, redox regulated molecular chaperone. Protects both thermally unfolding and oxidatively damaged proteins from irreversible aggregation. Plays an important role in the bacterial defense system toward oxidative stress. The polypeptide is 33 kDa chaperonin (Bacillus subtilis (strain 168)).